The sequence spans 203 residues: Thymidylate kinase (203 aa).

An ATP-binding site is contributed by 10–17; that stretch reads GIDGCGKT.

It belongs to the thymidylate kinase family.

It carries out the reaction dTMP + ATP = dTDP + ADP. Functionally, phosphorylation of dTMP to form dTDP in both de novo and salvage pathways of dTTP synthesis. The sequence is that of Thymidylate kinase from Thermoanaerobacter pseudethanolicus (strain ATCC 33223 / 39E) (Clostridium thermohydrosulfuricum).